A 261-amino-acid chain; its full sequence is Glutamate racemase (261 aa).

Residues 12–13 and 44–45 contribute to the substrate site; these read DS and YG. Cys-76 acts as the Proton donor/acceptor in catalysis. 77–78 serves as a coordination point for substrate; sequence NT. Cys-180 (proton donor/acceptor) is an active-site residue. 181–182 is a substrate binding site; the sequence is TH.

This sequence belongs to the aspartate/glutamate racemases family.

The catalysed reaction is L-glutamate = D-glutamate. The protein operates within cell wall biogenesis; peptidoglycan biosynthesis. In terms of biological role, provides the (R)-glutamate required for cell wall biosynthesis. The sequence is that of Glutamate racemase from Borreliella burgdorferi (strain ATCC 35210 / DSM 4680 / CIP 102532 / B31) (Borrelia burgdorferi).